The primary structure comprises 319 residues: Lipoyl synthase (319 aa).

Polar residues predominate over residues 1-12 (MVTIVDTLSNTP). The tract at residues 1 to 32 (MVTIVDTLSNTPLRPRHPEKANRPDSISPAKP) is disordered. [4Fe-4S] cluster contacts are provided by C61, C66, C72, C87, C91, C94, and S300. Residues 73–289 (WDKKHATFMI…ETVAYTKGFL (217 aa)) form the Radical SAM core domain.

The protein belongs to the radical SAM superfamily. Lipoyl synthase family. The cofactor is [4Fe-4S] cluster.

It is found in the cytoplasm. The enzyme catalyses [[Fe-S] cluster scaffold protein carrying a second [4Fe-4S](2+) cluster] + N(6)-octanoyl-L-lysyl-[protein] + 2 oxidized [2Fe-2S]-[ferredoxin] + 2 S-adenosyl-L-methionine + 4 H(+) = [[Fe-S] cluster scaffold protein] + N(6)-[(R)-dihydrolipoyl]-L-lysyl-[protein] + 4 Fe(3+) + 2 hydrogen sulfide + 2 5'-deoxyadenosine + 2 L-methionine + 2 reduced [2Fe-2S]-[ferredoxin]. The protein operates within protein modification; protein lipoylation via endogenous pathway; protein N(6)-(lipoyl)lysine from octanoyl-[acyl-carrier-protein]: step 2/2. Its function is as follows. Catalyzes the radical-mediated insertion of two sulfur atoms into the C-6 and C-8 positions of the octanoyl moiety bound to the lipoyl domains of lipoate-dependent enzymes, thereby converting the octanoylated domains into lipoylated derivatives. The protein is Lipoyl synthase of Bradyrhizobium sp. (strain BTAi1 / ATCC BAA-1182).